A 481-amino-acid polypeptide reads, in one-letter code: 3-ketoacyl-CoA synthase 8 (481 aa).

The next 2 helical transmembrane spans lie at 4-24 (LKMV…AMKG) and 44-64 (LQTI…YMLT). Residues 61–358 (YMLTRPKPVY…FFITFVKKKY (298 aa)) enclose the FAE domain. Active-site residues include Cys213, His292, His376, His380, His409, and Asn413.

The protein belongs to the thiolase-like superfamily. Chalcone/stilbene synthases family. As to expression, expressed in leaves and seedlings.

The protein resides in the endoplasmic reticulum membrane. It catalyses the reaction a very-long-chain acyl-CoA + malonyl-CoA + H(+) = a very-long-chain 3-oxoacyl-CoA + CO2 + CoA. Its pathway is lipid metabolism; fatty acid biosynthesis. The sequence is that of 3-ketoacyl-CoA synthase 8 from Arabidopsis thaliana (Mouse-ear cress).